Consider the following 289-residue polypeptide: 4-hydroxy-3-methylbut-2-enyl diphosphate reductase (289 aa).

A [4Fe-4S] cluster-binding site is contributed by C13. Residues H41 and H75 each coordinate (2E)-4-hydroxy-3-methylbut-2-enyl diphosphate. Dimethylallyl diphosphate-binding residues include H41 and H75. Isopentenyl diphosphate-binding residues include H41 and H75. A [4Fe-4S] cluster-binding site is contributed by C97. Position 129 (H129) interacts with (2E)-4-hydroxy-3-methylbut-2-enyl diphosphate. H129 is a binding site for dimethylallyl diphosphate. H129 is a binding site for isopentenyl diphosphate. E131 serves as the catalytic Proton donor. A (2E)-4-hydroxy-3-methylbut-2-enyl diphosphate-binding site is contributed by T167. Residue C198 participates in [4Fe-4S] cluster binding. 4 residues coordinate (2E)-4-hydroxy-3-methylbut-2-enyl diphosphate: S226, S227, N228, and S270. Dimethylallyl diphosphate is bound by residues S226, S227, N228, and S270. Residues S226, S227, N228, and S270 each contribute to the isopentenyl diphosphate site.

It belongs to the IspH family. [4Fe-4S] cluster is required as a cofactor.

The enzyme catalyses isopentenyl diphosphate + 2 oxidized [2Fe-2S]-[ferredoxin] + H2O = (2E)-4-hydroxy-3-methylbut-2-enyl diphosphate + 2 reduced [2Fe-2S]-[ferredoxin] + 2 H(+). The catalysed reaction is dimethylallyl diphosphate + 2 oxidized [2Fe-2S]-[ferredoxin] + H2O = (2E)-4-hydroxy-3-methylbut-2-enyl diphosphate + 2 reduced [2Fe-2S]-[ferredoxin] + 2 H(+). It functions in the pathway isoprenoid biosynthesis; dimethylallyl diphosphate biosynthesis; dimethylallyl diphosphate from (2E)-4-hydroxy-3-methylbutenyl diphosphate: step 1/1. It participates in isoprenoid biosynthesis; isopentenyl diphosphate biosynthesis via DXP pathway; isopentenyl diphosphate from 1-deoxy-D-xylulose 5-phosphate: step 6/6. Its function is as follows. Catalyzes the conversion of 1-hydroxy-2-methyl-2-(E)-butenyl 4-diphosphate (HMBPP) into a mixture of isopentenyl diphosphate (IPP) and dimethylallyl diphosphate (DMAPP). Acts in the terminal step of the DOXP/MEP pathway for isoprenoid precursor biosynthesis. In Bacteroides thetaiotaomicron (strain ATCC 29148 / DSM 2079 / JCM 5827 / CCUG 10774 / NCTC 10582 / VPI-5482 / E50), this protein is 4-hydroxy-3-methylbut-2-enyl diphosphate reductase.